A 611-amino-acid polypeptide reads, in one-letter code: Chaperone protein DnaK (611 aa).

Threonine 173 is subject to Phosphothreonine; by autocatalysis. Low complexity predominate over residues 579–592 (AAGQAEGAQGAQDA). Residues 579–598 (AAGQAEGAQGAQDAGAKKDN) are disordered.

The protein belongs to the heat shock protein 70 family.

Acts as a chaperone. The polypeptide is Chaperone protein DnaK (Bacillus cereus (strain ATCC 10987 / NRS 248)).